Reading from the N-terminus, the 106-residue chain is uncharacterized protein (106 aa).

The disordered stretch occupies residues 1 to 46 (MPQGGTPCRRARRAVRPERPTSPEGVFCVGGGAPGGPPDTTNTVSA).

This is an uncharacterized protein from Gracula (BFDV).